The sequence spans 241 residues: Protocatechuate 3,4-dioxygenase beta chain (241 aa).

Residues Tyr-109, Tyr-148, His-161, and His-163 each contribute to the Fe cation site.

It belongs to the intradiol ring-cleavage dioxygenase family. The enzyme is an oligomer of 12 copies of the alpha and beta chains. Fe(3+) is required as a cofactor.

The enzyme catalyses 3,4-dihydroxybenzoate + O2 = 3-carboxy-cis,cis-muconate + 2 H(+). The protein operates within aromatic compound metabolism; beta-ketoadipate pathway; 3-carboxy-cis,cis-muconate from 3,4-dihydroxybenzoate: step 1/1. In terms of biological role, plays an essential role in the utilization of numerous aromatic and hydroaromatic compounds via the beta-ketoadipate pathway. This Acinetobacter baylyi (strain ATCC 33305 / BD413 / ADP1) protein is Protocatechuate 3,4-dioxygenase beta chain (pcaH).